The following is a 177-amino-acid chain: Large ribosomal subunit protein uL6 (177 aa).

The protein belongs to the universal ribosomal protein uL6 family. In terms of assembly, part of the 50S ribosomal subunit.

Functionally, this protein binds to the 23S rRNA, and is important in its secondary structure. It is located near the subunit interface in the base of the L7/L12 stalk, and near the tRNA binding site of the peptidyltransferase center. This Roseobacter denitrificans (strain ATCC 33942 / OCh 114) (Erythrobacter sp. (strain OCh 114)) protein is Large ribosomal subunit protein uL6.